A 605-amino-acid polypeptide reads, in one-letter code: Isocitrate dehydrogenase kinase/phosphatase (605 aa).

Residues A327–L333 and K348 contribute to the ATP site. D383 is an active-site residue.

Belongs to the AceK family.

It is found in the cytoplasm. The catalysed reaction is L-seryl-[isocitrate dehydrogenase] + ATP = O-phospho-L-seryl-[isocitrate dehydrogenase] + ADP + H(+). In terms of biological role, bifunctional enzyme which can phosphorylate or dephosphorylate isocitrate dehydrogenase (IDH) on a specific serine residue. This is a regulatory mechanism which enables bacteria to bypass the Krebs cycle via the glyoxylate shunt in response to the source of carbon. When bacteria are grown on glucose, IDH is fully active and unphosphorylated, but when grown on acetate or ethanol, the activity of IDH declines drastically concomitant with its phosphorylation. This chain is Isocitrate dehydrogenase kinase/phosphatase, found in Burkholderia lata (strain ATCC 17760 / DSM 23089 / LMG 22485 / NCIMB 9086 / R18194 / 383).